The following is an 890-amino-acid chain: Possible lysine-specific histone demethylase 1 (890 aa).

Over residues 1–13 (MKPTQFGGSSSKM) the composition is skewed to polar residues. The tract at residues 1–164 (MKPTQFGGSS…TVLSGQEGAV (164 aa)) is disordered. 2 positions are modified to phosphoserine: Ser-24 and Ser-27. Polar residues predominate over residues 84 to 109 (NRPSGSGDTASNDKSGSASMGPNNQQ). The segment covering 110-122 (AERRSQSQTRKSE) has biased composition (basic and acidic residues). The span at 123 to 138 (ANATSSSVSGPSAGNS) shows a compositional bias: low complexity. One can recognise an SWIRM domain in the interval 160-259 (QEGAVFQSRL…FGIFKRLKPI (100 aa)). 267 to 295 (VIVIGAGISGLAVAHQLQQFGMDVIVLEA) is a binding site for FAD. The disordered stretch occupies residues 860 to 890 (DLSPNLSDSSPSSKKSEENSNSNTADSTELQ). Residues 861-882 (LSPNLSDSSPSSKKSEENSNSN) are compositionally biased toward low complexity. The residue at position 866 (Ser-866) is a Phosphoserine.

This sequence belongs to the flavin monoamine oxidase family. Component of a complex that contains at least HDAC1/Rpd3, CoRest and Su(var)3-3/Hdm. It depends on FAD as a cofactor.

The protein localises to the nucleus. The protein resides in the chromosome. In terms of biological role, probable histone demethylase that specifically demethylates 'Lys-4' of histone H3, a specific tag for epigenetic transcriptional activation, thereby acting as a corepressor. Required for heterochromatic gene silencing. Acts by oxidizing the substrate by FAD to generate the corresponding imine that is subsequently hydrolyzed. Demethylates both mono- and tri-methylated 'Lys-4' of histone H3. May also demethylate 'Lys-9' of histone H3, Plays a role in the repression of neuronal genes. In Drosophila melanogaster (Fruit fly), this protein is Possible lysine-specific histone demethylase 1 (Su(var)3-3).